Here is a 527-residue protein sequence, read N- to C-terminus: Putative BTB/POZ domain-containing protein R225 (527 aa).

The region spanning 16 to 89 (TDLELVLTDP…YGQTNRSTDY (74 aa)) is the BTB domain.

The protein belongs to the mimivirus BTB/WD family.

The polypeptide is Putative BTB/POZ domain-containing protein R225 (Acanthamoeba polyphaga (Amoeba)).